The following is a 303-amino-acid chain: Diaminopimelate epimerase (303 aa).

Asparagine 14 contacts substrate. The segment covering 60-74 has biased composition (low complexity); sequence PVSSAGATADAAAGR. Positions 60–86 are disordered; it reads PVSSAGATADAAAGRPPQPSAGRPPQP. The span at 75–86 shows a compositional bias: pro residues; it reads PPQPSAGRPPQP. Substrate is bound at residue asparagine 97. Cysteine 106 acts as the Proton donor in catalysis. Substrate is bound by residues 107 to 108, asparagine 178, asparagine 209, and 227 to 228; these read GN and ER. The active-site Proton acceptor is cysteine 236. Position 237–238 (237–238) interacts with substrate; it reads GS.

This sequence belongs to the diaminopimelate epimerase family. In terms of assembly, homodimer.

It is found in the cytoplasm. It catalyses the reaction (2S,6S)-2,6-diaminopimelate = meso-2,6-diaminopimelate. It functions in the pathway amino-acid biosynthesis; L-lysine biosynthesis via DAP pathway; DL-2,6-diaminopimelate from LL-2,6-diaminopimelate: step 1/1. Functionally, catalyzes the stereoinversion of LL-2,6-diaminopimelate (L,L-DAP) to meso-diaminopimelate (meso-DAP), a precursor of L-lysine and an essential component of the bacterial peptidoglycan. In Acidothermus cellulolyticus (strain ATCC 43068 / DSM 8971 / 11B), this protein is Diaminopimelate epimerase.